We begin with the raw amino-acid sequence, 615 residues long: Nitrogen permease regulator 2 (615 aa).

Residues 143–167 (STTTPSTAGPSSTPNPSSNTTPTHP) are compositionally biased toward low complexity. Disordered regions lie at residues 143 to 176 (STTTPSTAGPSSTPNPSSNTTPTHPTSEKDTKDM), 354 to 398 (SLGS…QNSS), and 527 to 551 (SATGSRNTAQSGNLKPERPSKVSFE). Phosphoserine is present on S362. Positions 373–398 (SSSIPSNPDSRTTSFSSTSRVSQNSS) are enriched in low complexity. The segment covering 527–539 (SATGSRNTAQSGN) has biased composition (polar residues).

Belongs to the NPR2 family. As to quaternary structure, component of the SEA complex composed of at least IML1/SEA1, RTC1/SEA2, MTC5/SEA3, NPR2, NPR3, SEA4, SEC13 and SEH1. Forms a heterodimer with NPR3.

The protein resides in the vacuole membrane. Component of the SEA complex which coats the vacuolar membrane and is involved in intracellular trafficking, autophagy, response to nitrogen starvation, and amino acid biogenesis. Mediates inactivation of the TORC1 complex in response to amino acid starvation. Post-transcriptional regulator of nitrogen permeases. May be involved in putative NPR1-dependent phosphorylation of nitrogen permeases or in the processing and targeting of nitrogen permeases at the level of the endoplasmic reticulum. The chain is Nitrogen permease regulator 2 (NPR2) from Saccharomyces cerevisiae (strain ATCC 204508 / S288c) (Baker's yeast).